The primary structure comprises 302 residues: Dihydroorotate dehydrogenase B (NAD(+)), catalytic subunit (302 aa).

FMN-binding positions include serine 23 and 47–48 (KG). Substrate-binding positions include lysine 47 and 71–75 (NSVGL). FMN-binding residues include asparagine 101 and asparagine 128. Residue asparagine 128 participates in substrate binding. Cysteine 131 (nucleophile) is an active-site residue. Residues lysine 166 and isoleucine 192 each coordinate FMN. A substrate-binding site is contributed by 193-194 (NT). FMN-binding positions include glycine 218, 244-245 (GG), and 266-267 (GT).

The protein belongs to the dihydroorotate dehydrogenase family. Type 1 subfamily. In terms of assembly, heterotetramer of 2 PyrK and 2 PyrD type B subunits. The cofactor is FMN.

The protein localises to the cytoplasm. It catalyses the reaction (S)-dihydroorotate + NAD(+) = orotate + NADH + H(+). It functions in the pathway pyrimidine metabolism; UMP biosynthesis via de novo pathway; orotate from (S)-dihydroorotate (NAD(+) route): step 1/1. In terms of biological role, catalyzes the conversion of dihydroorotate to orotate with NAD(+) as electron acceptor. This is Dihydroorotate dehydrogenase B (NAD(+)), catalytic subunit (pyrD) from Alkaliphilus oremlandii (strain OhILAs) (Clostridium oremlandii (strain OhILAs)).